The chain runs to 536 residues: Berberine bridge enzyme-like 2 (536 aa).

A signal peptide spans 1–20 (MKIFCLILFLISSFISTSLA). A disulfide bridge connects residues C35 and C98. N-linked (GlcNAc...) asparagine glycans are attached at residues N38, N73, N136, N266, N334, and N352. Residues 76–250 (ATPKPAIVIA…LAFKIKLVPV (175 aa)) enclose the FAD-binding PCMH-type domain. Positions 113–175 (HDYEGVSYIS…KSHGFPAGVC (63 aa)) form a cross-link, 6-(S-cysteinyl)-8alpha-(pros-histidyl)-FAD (His-Cys).

This sequence belongs to the oxygen-dependent FAD-linked oxidoreductase family. FAD is required as a cofactor. In terms of processing, the FAD cofactor is bound via a bicovalent 6-S-cysteinyl, 8alpha-N1-histidyl FAD linkage.

The protein localises to the secreted. It is found in the cell wall. The sequence is that of Berberine bridge enzyme-like 2 from Arabidopsis thaliana (Mouse-ear cress).